Consider the following 234-residue polypeptide: Putative N-acetylmannosamine-6-phosphate 2-epimerase (234 aa).

Belongs to the NanE family.

It catalyses the reaction an N-acyl-D-glucosamine 6-phosphate = an N-acyl-D-mannosamine 6-phosphate. It participates in amino-sugar metabolism; N-acetylneuraminate degradation; D-fructose 6-phosphate from N-acetylneuraminate: step 3/5. Converts N-acetylmannosamine-6-phosphate (ManNAc-6-P) to N-acetylglucosamine-6-phosphate (GlcNAc-6-P). The polypeptide is Putative N-acetylmannosamine-6-phosphate 2-epimerase (Klebsiella pneumoniae (strain 342)).